Consider the following 489-residue polypeptide: MESMFSSPAEAALQREAGMPGLLTPLPDLDRVYELERVAGFVRDLGCERVALQFPDQLLGDAVAVAARLEETTGSKMFILGDTAYGSCCVDVLGAEQAGAQAVIHFGPACLSPPARPLPVTFVLCRRSVALELCVKAFEAQNPDPKAPVVLLSEPACAHALEALATLLRPRYLDLLVSSPAFPLPVGSLSPEPKPLERFGRRFPLAPGRRLEEYGAFYVGGSKASPDPDLDPDLSRLLLGWAPGQPFSSCCPDTGKTQDEGARAGRLRARRRYLVERARDARVVGLLVGTLGVAQHREALAHLRNLTQAAGKRSYVLALGRPTPAKLANFPEVDVFVLLACPLGALAPQLSGSFFQPILAPCELEAACNPAWPPPGLAPHLTHYADLLPGSPFHVPLPPSESELWETPDVSLITGDLRPPPAWKSSNDHGSLALTPRPQLELAESSPAASFLSSRSWQGLEPRLGQTPVTEAVSGRRGIAIAYEDEGSG.

M1 bears the N-acetylmethionine mark. Residue S7 is modified to Phosphoserine. [4Fe-4S] cluster contacts are provided by C89, C110, and C341. The residue at position 435 (T435) is a Phosphothreonine. Residues S446 and S456 each carry the phosphoserine modification. A Phosphothreonine modification is found at T467. Phosphoserine is present on S488.

It belongs to the DPH1/DPH2 family. DPH2 subfamily. Component of the 2-(3-amino-3-carboxypropyl)histidine synthase complex composed of DPH1, DPH2, DPH3 and a NADH-dependent reductase. Interacts with DPH1. [4Fe-4S] cluster is required as a cofactor.

The protein operates within protein modification; peptidyl-diphthamide biosynthesis. Required for the first step of diphthamide biosynthesis, a post-translational modification of histidine which occurs in elongation factor 2. DPH1 and DPH2 transfer a 3-amino-3-carboxypropyl (ACP) group from S-adenosyl-L-methionine (SAM) to a histidine residue, the reaction is assisted by a reduction system comprising DPH3 and a NADH-dependent reductase. Facilitates the reduction of the catalytic iron-sulfur cluster found in the DPH1 subunit. The protein is 2-(3-amino-3-carboxypropyl)histidine synthase subunit 2 (DPH2) of Pongo abelii (Sumatran orangutan).